We begin with the raw amino-acid sequence, 393 residues long: ATP phosphoribosyltransferase regulatory subunit (393 aa).

It belongs to the class-II aminoacyl-tRNA synthetase family. HisZ subfamily. As to quaternary structure, heteromultimer composed of HisG and HisZ subunits.

It is found in the cytoplasm. It functions in the pathway amino-acid biosynthesis; L-histidine biosynthesis; L-histidine from 5-phospho-alpha-D-ribose 1-diphosphate: step 1/9. Its function is as follows. Required for the first step of histidine biosynthesis. May allow the feedback regulation of ATP phosphoribosyltransferase activity by histidine. The sequence is that of ATP phosphoribosyltransferase regulatory subunit from Shouchella clausii (strain KSM-K16) (Alkalihalobacillus clausii).